Consider the following 145-residue polypeptide: Hemoglobin fetal subunit beta (145 aa).

The Globin domain occupies 1 to 145 (MLTAEEKASV…VANALAHRYH (145 aa)). Residues histidine 62 and histidine 91 each coordinate heme b.

This sequence belongs to the globin family. Heterotetramer of two alpha chains and two beta chains.

The chain is Hemoglobin fetal subunit beta from Ovis aries (Sheep).